The chain runs to 177 residues: MGSGAGNFLKVLLRNFDVLAGPVVSLVYPLYASVQAIETQSHADDKQWLTYWVLYSLLTLIELTFAKLIEWLPIWSYMKLILTCWLVIPYFSGAAYVYEHFVRPVFVNPRSINIWYVPKKMDIFRKPDDVLTAAEKYIAENGPDAFEKILSRADKSKRYNKHEYESYETMYGEGYQY.

3 consecutive transmembrane segments (helical) span residues V18 to E38, Q47 to K67, and L68 to I88.

The protein belongs to the DP1 family. As to expression, predominantly expressed in flower buds and stem.

It localises to the membrane. The sequence is that of HVA22-like protein a (HVA22A) from Arabidopsis thaliana (Mouse-ear cress).